Here is a 181-residue protein sequence, read N- to C-terminus: Ferritin heavy chain (181 aa).

Residues 10 to 159 (QNYHQDCEAA…DHVTNLRKMG (150 aa)) form the Ferritin-like diiron domain. Glu-27, Glu-62, His-65, Glu-107, and Gln-141 together coordinate Fe cation.

This sequence belongs to the ferritin family. Oligomer of 24 subunits. There are two types of subunits: L (light) chain and H (heavy) chain. The major chain can be light or heavy, depending on the species and tissue type. The functional molecule forms a roughly spherical shell with a diameter of 12 nm and contains a central cavity into which the insoluble mineral iron core is deposited. In terms of tissue distribution, expressed in erythroblasts (at protein level). Expressed in heart, liver, spleen, lung, kidney, large intestine, small intestine, muscle, glandular stomach, ovary and oviduct.

Its subcellular location is the cytoplasm. The protein localises to the lysosome. It localises to the cytoplasmic vesicle. It is found in the autophagosome. The enzyme catalyses 4 Fe(2+) + O2 + 4 H(+) = 4 Fe(3+) + 2 H2O. Stores iron in a soluble, non-toxic, readily available form. Important for iron homeostasis. Has ferroxidase activity. Iron is taken up in the ferrous form and deposited as ferric hydroxides after oxidation. Also plays a role in delivery of iron to cells. Mediates iron uptake in capsule cells of the developing kidney. Delivery to lysosomes is mediated by the cargo receptor NCOA4 for autophagic degradation and release of iron. Functionally, inhibits translation of various mRNA species in vitro. Associates with a 35S prosome-like particle that contains non-translated mRNAs in a complex with proteins. May be involved in pre-translational regulation of some mRNA. The protein is Ferritin heavy chain of Anas platyrhynchos (Mallard).